The following is a 566-amino-acid chain: Glutamate--tRNA ligase (566 aa).

The short motif at 105 to 115 is the 'HIGH' region element; it reads PNPDGPIHLGN.

Belongs to the class-I aminoacyl-tRNA synthetase family. Glutamate--tRNA ligase type 2 subfamily.

It is found in the cytoplasm. It carries out the reaction tRNA(Glu) + L-glutamate + ATP = L-glutamyl-tRNA(Glu) + AMP + diphosphate. Functionally, catalyzes the attachment of glutamate to tRNA(Glu) in a two-step reaction: glutamate is first activated by ATP to form Glu-AMP and then transferred to the acceptor end of tRNA(Glu). In Sulfurisphaera tokodaii (strain DSM 16993 / JCM 10545 / NBRC 100140 / 7) (Sulfolobus tokodaii), this protein is Glutamate--tRNA ligase.